Reading from the N-terminus, the 185-residue chain is Ribosome-recycling factor (185 aa).

This sequence belongs to the RRF family.

The protein localises to the cytoplasm. Responsible for the release of ribosomes from messenger RNA at the termination of protein biosynthesis. May increase the efficiency of translation by recycling ribosomes from one round of translation to another. This Haemophilus influenzae (strain 86-028NP) protein is Ribosome-recycling factor.